Here is a 329-residue protein sequence, read N- to C-terminus: Glycerol-3-phosphate dehydrogenase [NAD(P)+] (329 aa).

3 residues coordinate NADPH: W15, H35, and K107. Residues K107, G135, and S137 each coordinate sn-glycerol 3-phosphate. Residue A139 participates in NADPH binding. Positions 190, 243, 253, 254, and 255 each coordinate sn-glycerol 3-phosphate. The active-site Proton acceptor is the K190. R254 serves as a coordination point for NADPH. Positions 276 and 278 each coordinate NADPH.

The protein belongs to the NAD-dependent glycerol-3-phosphate dehydrogenase family.

The protein localises to the cytoplasm. The enzyme catalyses sn-glycerol 3-phosphate + NAD(+) = dihydroxyacetone phosphate + NADH + H(+). It carries out the reaction sn-glycerol 3-phosphate + NADP(+) = dihydroxyacetone phosphate + NADPH + H(+). The protein operates within membrane lipid metabolism; glycerophospholipid metabolism. Its function is as follows. Catalyzes the reduction of the glycolytic intermediate dihydroxyacetone phosphate (DHAP) to sn-glycerol 3-phosphate (G3P), the key precursor for phospholipid synthesis. In Rhodopseudomonas palustris (strain HaA2), this protein is Glycerol-3-phosphate dehydrogenase [NAD(P)+].